A 673-amino-acid chain; its full sequence is UvrABC system protein B (673 aa).

The region spanning 25 to 413 (EGIESGLAHQ…GSDIAEQVVR (389 aa)) is the Helicase ATP-binding domain. 38–45 (GVTGSGKT) contacts ATP. Positions 91–114 (YYDYYQPEAYVPTTDTFIEKDASV) match the Beta-hairpin motif. The Helicase C-terminal domain occupies 430-583 (QVDDLLSEIN…QHQYNLDNNI (154 aa)). In terms of domain architecture, UVR spans 634–669 (DTKIVELEKLMQGHAQNLEFEQAAAMRDKIAKLRIQ).

It belongs to the UvrB family. Forms a heterotetramer with UvrA during the search for lesions. Interacts with UvrC in an incision complex.

Its subcellular location is the cytoplasm. Its function is as follows. The UvrABC repair system catalyzes the recognition and processing of DNA lesions. A damage recognition complex composed of 2 UvrA and 2 UvrB subunits scans DNA for abnormalities. Upon binding of the UvrA(2)B(2) complex to a putative damaged site, the DNA wraps around one UvrB monomer. DNA wrap is dependent on ATP binding by UvrB and probably causes local melting of the DNA helix, facilitating insertion of UvrB beta-hairpin between the DNA strands. Then UvrB probes one DNA strand for the presence of a lesion. If a lesion is found the UvrA subunits dissociate and the UvrB-DNA preincision complex is formed. This complex is subsequently bound by UvrC and the second UvrB is released. If no lesion is found, the DNA wraps around the other UvrB subunit that will check the other stand for damage. This Colwellia psychrerythraea (strain 34H / ATCC BAA-681) (Vibrio psychroerythus) protein is UvrABC system protein B.